The primary structure comprises 468 residues: Ubiquitin carboxyl-terminal hydrolase MINDY-1 (468 aa).

Positions 1–19 are enriched in polar residues; sequence MEQPQTENPAPSKATSAET. Residues 1-105 form a disordered region; it reads MEQPQTENPA…RPQELPQSPR (105 aa). Over residues 22-41 the composition is skewed to basic and acidic residues; the sequence is SENHEALSGPEKHPQDKDGA. Over residues 43–54 the composition is skewed to low complexity; the sequence is ADGAAGEQEPGD. Residues 68–80 are compositionally biased toward pro residues; that stretch reads CPPPEASSSPPGP. S103 carries the post-translational modification Phosphoserine. The active-site Nucleophile is the C137. Catalysis depends on H319, which acts as the Proton acceptor. A ubiquitin-binding domain (UBD) region spans residues 388–427; the sequence is QVDQDYLIALSLQQQQQPQGTLGLSDLELAQQLQQEEYQQ. The segment covering 423–432 has biased composition (low complexity); the sequence is EEYQQQQAVQ. The tract at residues 423–468 is disordered; the sequence is EEYQQQQAVQPVRTRAPSPQGRGATSGRPAGERRQRSKTESDCVLL. S440 is subject to Phosphoserine. Over residues 452–468 the composition is skewed to basic and acidic residues; sequence AGERRQRSKTESDCVLL.

Belongs to the MINDY deubiquitinase family. FAM63 subfamily.

The catalysed reaction is Thiol-dependent hydrolysis of ester, thioester, amide, peptide and isopeptide bonds formed by the C-terminal Gly of ubiquitin (a 76-residue protein attached to proteins as an intracellular targeting signal).. Functionally, hydrolase that can specifically remove 'Lys-48'-linked conjugated ubiquitin from proteins. Has exodeubiquitinase activity and has a preference for long polyubiquitin chains. May play a regulatory role at the level of protein turnover. This is Ubiquitin carboxyl-terminal hydrolase MINDY-1 (Mindy1) from Mus musculus (Mouse).